The following is a 214-amino-acid chain: Coiled-coil domain-containing protein 169 (214 aa).

Residues 30–144 (EMLQMSTFEL…IEQEAKAYYK (115 aa)) adopt a coiled-coil conformation. Residues 161–214 (VTQEAAKKQQSDPAHATREKPAFKAKYNGLAKRRTMTKRRGGMTKGSHPSNMKH) form a disordered region. The segment covering 165-182 (AAKKQQSDPAHATREKPA) has biased composition (basic and acidic residues). Over residues 191 to 202 (AKRRTMTKRRGG) the composition is skewed to basic residues.

The protein belongs to the CCDC169 family.

The polypeptide is Coiled-coil domain-containing protein 169 (ccdc169) (Xenopus laevis (African clawed frog)).